We begin with the raw amino-acid sequence, 307 residues long: Non-homologous end joining protein Ku (307 aa).

Residues 11 to 179 (LSFGLVSIPV…EVRSMKDLNI (169 aa)) enclose the Ku domain. Low complexity-rich tracts occupy residues 257–267 (RGGAKAKPAAA) and 290–307 (ARAP…RARK). The interval 257-307 (RGGAKAKPAAAPRRKAPEPVAGMAEATRARKPAARAPKSPAEAPAKVRARK) is disordered.

The protein belongs to the prokaryotic Ku family. Homodimer. Interacts with LigD.

With LigD forms a non-homologous end joining (NHEJ) DNA repair enzyme, which repairs dsDNA breaks with reduced fidelity. Binds linear dsDNA with 5'- and 3'- overhangs but not closed circular dsDNA nor ssDNA. Recruits and stimulates the ligase activity of LigD. This is Non-homologous end joining protein Ku from Paraburkholderia phymatum (strain DSM 17167 / CIP 108236 / LMG 21445 / STM815) (Burkholderia phymatum).